The primary structure comprises 281 residues: Aliphatic sulfonates import ATP-binding protein SsuB (281 aa).

The ABC transporter domain maps to 40–263 (LTLRNLRKSF…RRGSADLAAL (224 aa)). 72–79 (GRSGCGKS) lines the ATP pocket.

The protein belongs to the ABC transporter superfamily. Aliphatic sulfonates importer (TC 3.A.1.17.2) family. In terms of assembly, the complex is composed of two ATP-binding proteins (SsuB), two transmembrane proteins (SsuC) and a solute-binding protein (SsuA).

It is found in the cell inner membrane. It catalyses the reaction ATP + H2O + aliphatic sulfonate-[sulfonate-binding protein]Side 1 = ADP + phosphate + aliphatic sulfonateSide 2 + [sulfonate-binding protein]Side 1.. In terms of biological role, part of the ABC transporter complex SsuABC involved in aliphatic sulfonates import. Responsible for energy coupling to the transport system. The sequence is that of Aliphatic sulfonates import ATP-binding protein SsuB from Rhodopseudomonas palustris (strain BisA53).